A 789-amino-acid polypeptide reads, in one-letter code: Bifunctional purine biosynthetic protein PUR2,5 (789 aa).

The segment at 1 to 428 is GARS; sequence MEKINVLVVG…NRTDIAHRAF (428 aa). Positions 114–321 constitute an ATP-grasp domain; the sequence is KDFMKKHNIP…LLELMLATVE (208 aa). 140 to 201 lines the ATP pocket; it reads IANSSHNLVI…EEFLEGDELS (62 aa). Mg(2+)-binding residues include E291 and N293. The AIRS stretch occupies residues 438-773; it reads LTYEDAGVSV…TVYTIGKLVE (336 aa).

This sequence in the N-terminal section; belongs to the GARS family. In the C-terminal section; belongs to the AIR synthase family. Mg(2+) is required as a cofactor. It depends on Mn(2+) as a cofactor.

Its subcellular location is the cytoplasm. The protein localises to the cytosol. It catalyses the reaction 2-formamido-N(1)-(5-O-phospho-beta-D-ribosyl)acetamidine + ATP = 5-amino-1-(5-phospho-beta-D-ribosyl)imidazole + ADP + phosphate + H(+). It carries out the reaction 5-phospho-beta-D-ribosylamine + glycine + ATP = N(1)-(5-phospho-beta-D-ribosyl)glycinamide + ADP + phosphate + H(+). It participates in purine metabolism; IMP biosynthesis via de novo pathway; 5-amino-1-(5-phospho-D-ribosyl)imidazole from N(2)-formyl-N(1)-(5-phospho-D-ribosyl)glycinamide: step 2/2. It functions in the pathway purine metabolism; IMP biosynthesis via de novo pathway; N(1)-(5-phospho-D-ribosyl)glycinamide from 5-phospho-alpha-D-ribose 1-diphosphate: step 2/2. In terms of biological role, catalyzes the second and fifth step in the 'de novo' purine biosynthesis pathway; contains phosphoribosylamine--glycine ligase (GARS) and phosphoribosylformylglycinamidine cyclo-ligase (AIRS) activities. The protein is Bifunctional purine biosynthetic protein PUR2,5 of Pichia angusta (Yeast).